The following is a 441-amino-acid chain: uncharacterized protein (441 aa).

Low complexity predominate over residues 121–143 (TLSPSIVSEQQQQQQQQQQQQQQ). Disordered stretches follow at residues 121 to 146 (TLSP…QAIS) and 371 to 392 (SDAD…TAPN). Positions 382–391 (PTSAPSTTAP) are enriched in polar residues.

This is an uncharacterized protein from Dictyostelium discoideum (Social amoeba).